The primary structure comprises 488 residues: Long chain base biosynthesis protein 2a (488 aa).

The helical transmembrane segment at L4–Q24 threads the bilayer. K311 is modified (N6-(pyridoxal phosphate)lysine).

Belongs to the class-II pyridoxal-phosphate-dependent aminotransferase family. As to quaternary structure, heterodimer with LCB1. Component of the serine palmitoyltransferase (SPT) complex, composed of LCB1 and LCB2. The cofactor is pyridoxal 5'-phosphate.

It localises to the endoplasmic reticulum membrane. The enzyme catalyses L-serine + hexadecanoyl-CoA + H(+) = 3-oxosphinganine + CO2 + CoA. It functions in the pathway lipid metabolism; sphingolipid metabolism. Functionally, serine palmitoyltransferase (SPT). The heterodimer formed with LCB1 constitutes the catalytic core. The sequence is that of Long chain base biosynthesis protein 2a from Oryza sativa subsp. japonica (Rice).